We begin with the raw amino-acid sequence, 150 residues long: MSSTKRQKNRVLVKLKKRKVRKDKIEKWAELALSALGLNNVELSVYITDDQEIRELNKTYRKKDKPTDVLSFPMGEEFGGYKILGDVVISQDTAERQARELGHSLEEEVKRLIVHGIVHLLGYDHEKGGEEEKKFRELENYVLSKLSKAL.

The Zn(2+) site is built by His115, His119, and His125.

The protein belongs to the endoribonuclease YbeY family. Zn(2+) serves as cofactor.

Its subcellular location is the cytoplasm. Single strand-specific metallo-endoribonuclease involved in late-stage 70S ribosome quality control and in maturation of the 3' terminus of the 16S rRNA. In Aquifex aeolicus (strain VF5), this protein is Endoribonuclease YbeY.